A 144-amino-acid polypeptide reads, in one-letter code: Virulence protein STM3117 (144 aa).

The VOC domain occupies 23–143 (RIDHLVLTVS…DGNLIEISQY (121 aa)).

Is critically involved in promoting the replication of S.typhimurium cells inside host macrophages, suggesting a role in the establishment of bacterial colonization within macrophages. May be involved in the biosynthesis and modification of the peptidoglycan layer of the cell wall. The sequence is that of Virulence protein STM3117 from Salmonella typhimurium (strain LT2 / SGSC1412 / ATCC 700720).